The following is a 349-amino-acid chain: MNFNNFTSDLNGKTCVKCEKEAKFTGVDPKKAWYCQECFIQMVRNKFRSALSKKKIYKEADARDTLVVYDGSPSGTFLLNQIDDALKQITYKRLMVKPTVLVLVSESEEPEIQQVIKRVAEIKKNFLENVNWFIAHIAFCLYDEPSELKEFECNGIEKITAYKYLLASCSVPTYKKELERMLKEKCLQKLAESLKVTKCMVTDDADDLGRLALDQLCLGRGGSLSSLVTVAEKRNDFMIIRPLCDLSKREISIYNYLCKIDDHYIQFSHTQSQEKSVQTLTDAFIRTLEDEKFYSTINTVLSTASKIHNTNGKDGSRCSMCYVEVAEFQCETCSAVRNSCSENLNIIFS.

It belongs to the CTU2/NCS2 family.

It is found in the cytoplasm. The protein operates within tRNA modification; 5-methoxycarbonylmethyl-2-thiouridine-tRNA biosynthesis. Plays a central role in 2-thiolation of mcm(5)S(2)U at tRNA wobble positions of tRNA(Lys), tRNA(Glu) and tRNA(Gln). May act by forming a heterodimer with tut-1/ctu-1 that ligates sulfur from thiocarboxylated urm-1 onto the uridine of tRNAs at wobble position. The polypeptide is Cytoplasmic tRNA 2-thiolation protein 2 (Caenorhabditis briggsae).